A 164-amino-acid polypeptide reads, in one-letter code: DNA-directed RNA polymerase 19 kDa subunit (164 aa).

Residues 1 to 35 (MADTDDIIDYESDDLTEYEDDDEEEEDGESLETSD) show a composition bias toward acidic residues. The tract at residues 1–39 (MADTDDIIDYESDDLTEYEDDDEEEEDGESLETSDIDPK) is disordered.

It belongs to the poxviridae DNA-directed RNA polymerase 19 kDa subunit family. The DNA-dependent RNA polymerase used for intermediate and late genes expression consists of eight subunits Rpo30/OPG66, Rpo7/OPG90, Rpo22/OPG103, Rpo147/OPG105, Rpo18/OPG119, Rpo19/OPG131, Rpo132/OPG151 and Rpo35/OPG156. The same holoenzyme, with the addition of the transcription-specificity factor OPG109, is used for early gene expression.

It is found in the virion. It catalyses the reaction RNA(n) + a ribonucleoside 5'-triphosphate = RNA(n+1) + diphosphate. Functionally, part of the DNA-dependent RNA polymerase which catalyzes the transcription of viral DNA into RNA using the four ribonucleoside triphosphates as substrates. Responsible for the transcription of early, intermediate and late genes. DNA-dependent RNA polymerase associates with the early transcription factor (ETF), itself composed of OPG118 and OPG133, thereby allowing the early genes transcription. Late transcription, and probably also intermediate transcription, require newly synthesized RNA polymerase. The chain is DNA-directed RNA polymerase 19 kDa subunit (OPG131) from Variola virus (isolate Human/India/Ind3/1967) (VARV).